The following is a 233-amino-acid chain: Translation initiation factor IF-3 (233 aa).

2 disordered regions span residues 1–21 (MAIQHRDPRGGGGSRDARTNR) and 184–233 (LQSQ…AAQR). The segment covering 193-211 (AAAAAAPAAAPAAPAAGAP) has biased composition (low complexity). Over residues 212 to 223 (APAPAPAAPAPA) the composition is skewed to pro residues. Residues 224–233 (PAAADPAAQR) are compositionally biased toward low complexity.

It belongs to the IF-3 family. In terms of assembly, monomer.

The protein resides in the cytoplasm. In terms of biological role, IF-3 binds to the 30S ribosomal subunit and shifts the equilibrium between 70S ribosomes and their 50S and 30S subunits in favor of the free subunits, thus enhancing the availability of 30S subunits on which protein synthesis initiation begins. In Anaeromyxobacter dehalogenans (strain 2CP-C), this protein is Translation initiation factor IF-3.